Consider the following 254-residue polypeptide: NAD-dependent protein deacetylase 1 (254 aa).

The region spanning 5–254 is the Deacetylase sirtuin-type domain; that stretch reads ASDLRSGVER…GETLGPFVGN (250 aa). NAD(+) contacts are provided by Ala-31, Thr-35, Phe-42, Arg-43, Gln-108, Ile-110, Asp-111, and His-128. Phe-42 is a nicotinamide binding site. 2 residues coordinate nicotinamide: Ile-110 and Asp-111. His-128 acts as the Proton acceptor in catalysis. Residues Cys-136, Cys-139, Cys-160, and Cys-163 each coordinate Zn(2+). Ser-201, Ser-202, Asn-226, Asp-243, and Ile-244 together coordinate NAD(+).

The protein belongs to the sirtuin family. Class U subfamily. Requires Zn(2+) as cofactor.

Its subcellular location is the cytoplasm. The catalysed reaction is N(6)-acetyl-L-lysyl-[protein] + NAD(+) + H2O = 2''-O-acetyl-ADP-D-ribose + nicotinamide + L-lysyl-[protein]. Functionally, NAD-dependent protein deacetylase which modulates the activities of several enzymes which are inactive in their acetylated form. The sequence is that of NAD-dependent protein deacetylase 1 from Bradyrhizobium diazoefficiens (strain JCM 10833 / BCRC 13528 / IAM 13628 / NBRC 14792 / USDA 110).